A 223-amino-acid polypeptide reads, in one-letter code: MFLRRVHPVRLGHAIQRSLTTTKSRNESTTTTVEAPQAVPSPPPDAFTEEFLRNQIKVTELQRVILGVGSSLAALVNPRRHDMIACLGETTGVPALDAIRRQMLASDEGRQILADRPRINTRTVDMAALKALPETSFGHQYVHFLEKHDITPDSRAEVRFMDDPELAYVMTRYREVHDLVHTVLGMPTNMLGEVAVKWVEALNTGLPMCYGGAVFGAFRLRPK.

Residues 1–26 (MFLRRVHPVRLGHAIQRSLTTTKSRN) constitute a mitochondrion transit peptide. Low complexity predominate over residues 21 to 32 (TTKSRNESTTTT). Positions 21–43 (TTKSRNESTTTTVEAPQAVPSPP) are disordered. 4 residues coordinate Zn(2+): H177, D178, H181, and E193.

It belongs to the COQ4 family. In terms of assembly, component of a multi-subunit COQ enzyme complex. Requires Zn(2+) as cofactor.

Its subcellular location is the mitochondrion inner membrane. The catalysed reaction is a 4-hydroxy-3-methoxy-5-(all-trans-polyprenyl)benzoate + H(+) = a 2-methoxy-6-(all-trans-polyprenyl)phenol + CO2. It participates in cofactor biosynthesis; ubiquinone biosynthesis. Its function is as follows. Lyase that catalyzes the C1-decarboxylation of 4-hydroxy-3-methoxy-5-(all-trans-polyprenyl)benzoic acid into 2-methoxy-6-(all-trans-polyprenyl)phenol during ubiquinone biosynthesis. The protein is Ubiquinone biosynthesis protein COQ4 homolog 2, mitochondrial of Culex quinquefasciatus (Southern house mosquito).